Consider the following 73-residue polypeptide: uncharacterized protein (73 aa).

A disordered region spans residues 48-73 (AKEPEKKTPSMEAKATSLSPNKASAS). Polar residues predominate over residues 63 to 73 (TSLSPNKASAS).

This is an uncharacterized protein from Saccharomyces cerevisiae (strain ATCC 204508 / S288c) (Baker's yeast).